The primary structure comprises 396 residues: 1-deoxy-D-xylulose 5-phosphate reductoisomerase (396 aa).

The NADPH site is built by T10, G11, S12, I13, and N123. K124 contacts 1-deoxy-D-xylulose 5-phosphate. An NADPH-binding site is contributed by E125. Mn(2+) is bound at residue D149. 1-deoxy-D-xylulose 5-phosphate is bound by residues S150, E151, S185, and H208. E151 serves as a coordination point for Mn(2+). G214 contacts NADPH. Residues S221, N226, K227, and E230 each contribute to the 1-deoxy-D-xylulose 5-phosphate site. E230 provides a ligand contact to Mn(2+).

It belongs to the DXR family. Mg(2+) is required as a cofactor. Mn(2+) serves as cofactor.

It carries out the reaction 2-C-methyl-D-erythritol 4-phosphate + NADP(+) = 1-deoxy-D-xylulose 5-phosphate + NADPH + H(+). It participates in isoprenoid biosynthesis; isopentenyl diphosphate biosynthesis via DXP pathway; isopentenyl diphosphate from 1-deoxy-D-xylulose 5-phosphate: step 1/6. Functionally, catalyzes the NADPH-dependent rearrangement and reduction of 1-deoxy-D-xylulose-5-phosphate (DXP) to 2-C-methyl-D-erythritol 4-phosphate (MEP). The chain is 1-deoxy-D-xylulose 5-phosphate reductoisomerase from Shewanella sp. (strain MR-4).